The chain runs to 320 residues: MTLFKRQWFVLVSAVSAALSVVLFPLEVFSASPNSVGGGVQQMNILQAIVLGFVQGMTEFLPISSTAHLKVVPVALGWGDPGVAFTAIIQLGSIAAVLWYFWGDLTRIIKGATRAIALKDYADYDLRLSLGIILGTIPIVFFGLLIKKLIPDFDSSPIRSLGAIAVASIVMSLLLGVGEKLGKRERDFEHLTMQDGLLMGLAQALALIPGVSRSGSTLTSGLFMGLQRETAARFSFLLGIPAITLAGLVELKDVFAEGIADGAALPLIVGVISAAIFSYMAIAGLLSFLKTQSTWVFIWYRLVFGIAILGAISAGILQNS.

The next 8 membrane-spanning stretches (helical) occupy residues 9-29 (FVLV…LEVF), 82-102 (GVAF…WYFW), 130-150 (LGII…KKLI), 161-181 (LGAI…GEKL), 191-211 (LTMQ…IPGV), 236-256 (FLLG…DVFA), 265-285 (LPLI…IAGL), and 296-316 (VFIW…SAGI).

It belongs to the UppP family.

It localises to the cell inner membrane. It catalyses the reaction di-trans,octa-cis-undecaprenyl diphosphate + H2O = di-trans,octa-cis-undecaprenyl phosphate + phosphate + H(+). Catalyzes the dephosphorylation of undecaprenyl diphosphate (UPP). Confers resistance to bacitracin. The chain is Undecaprenyl-diphosphatase from Trichormus variabilis (strain ATCC 29413 / PCC 7937) (Anabaena variabilis).